We begin with the raw amino-acid sequence, 1537 residues long: Flocculation protein FLO1 (1537 aa).

Positions 1 to 24 are cleaved as a signal peptide; that stretch reads MTMPHRYMFLAVFTLLALTSVASG. Residues 74–249 enclose the PA14 domain; that stretch reads GGQTDISIDY…GTTVSDDFEG (176 aa). N-linked (GlcNAc...) asparagine glycans are attached at residues Asn135 and Asn187. The interval 197–240 is sugar recognition; sequence GGSLPPNIEGTVYMYAGYYYPMKVVYSNAVSWGTLPISVTLPDG. N-linked (GlcNAc...) asparagine glycosylation occurs at Asn262. A run of 18 repeats spans residues 278 to 322, 323 to 367, 368 to 412, 413 to 457, 458 to 502, 503 to 547, 548 to 592, 593 to 637, 638 to 682, 683 to 727, 728 to 772, 773 to 817, 818 to 862, 863 to 907, 908 to 952, 953 to 997, 998 to 1042, and 1043 to 1087. An 18 X 45 AA approximate tandem repeats, Thr-rich region spans residues 278–1087; that stretch reads TTTEPWTGTF…KTPTTAISSS (810 aa). 10 N-linked (GlcNAc...) asparagine glycosylation sites follow: Asn329, Asn374, Asn419, Asn464, Asn509, Asn554, Asn599, Asn644, Asn689, and Asn734. 2 disordered regions span residues 770 to 799 and 860 to 889; these read LISTTTEPWTGTFTSTSTEMTTVTGTNGQP and LISTTTEPWTGTFTSTSTEMTTITGTNGQP. Residues 773-795 show a composition bias toward low complexity; that stretch reads TTTEPWTGTFTSTSTEMTTVTGT. Residues 863–885 show a composition bias toward low complexity; the sequence is TTTEPWTGTFTSTSTEMTTITGT. Residues 995–1024 form a disordered region; that stretch reads LISTTTEPWTGTFTSTSTEMTTVTGTNGQP. The span at 998–1020 shows a compositional bias: low complexity; sequence TTTEPWTGTFTSTSTEMTTVTGT. Asn1114 carries N-linked (GlcNAc...) asparagine glycosylation. Tandem repeats lie at residues 1118–1137 and 1138–1157. The segment at 1118–1157 is 2 X 20 AA approximate tandem repeats, Ser/Thr-rich; the sequence is VISSSVISSSVTSSLFTSSPVISSSVISSSTTTSTSIFSE. A compositionally biased stretch (low complexity) spans 1161–1220; sequence SSVIPTSSSTSGSSESETSSAGSVSSSSFISSESSKSPTYSSSSLPLVTSATTSQETASS. Residues 1161-1232 are disordered; that stretch reads SSVIPTSSST…PATTTKTSEQ (72 aa). The span at 1222-1232 shows a compositional bias: polar residues; the sequence is PPATTTKTSEQ. A run of 6 repeats spans residues 1226–1276, 1291–1341, 1342–1392, 1408–1416, 1417–1425, and 1426–1434. The tract at residues 1226-1392 is 3 X 51 AA approximate repeats, Ser/Thr-rich; that stretch reads TTKTSEQTTL…TVYPTWRPQT (167 aa). A compositionally biased stretch (polar residues) spans 1392-1404; sequence TANEESVSSKMNS. The disordered stretch occupies residues 1392-1414; it reads TANEESVSSKMNSATGETTTNTL. The span at 1405 to 1414 shows a compositional bias: low complexity; it reads ATGETTTNTL. The 3 X 9 AA approximate tandem repeats, Thr-rich stretch occupies residues 1408–1434; it reads ETTTNTLAAETTTNTVAAETITNTGAA. The interval 1468 to 1497 is disordered; that stretch reads VSVSETGNTKSLTSSGLSTMSQQPRSTPAS. Residues 1472–1497 are compositionally biased toward polar residues; sequence ETGNTKSLTSSGLSTMSQQPRSTPAS. Gly1514 carries the GPI-anchor amidated glycine lipid modification. Positions 1515–1537 are cleaved as a propeptide — removed in mature form; that stretch reads SANSLLAGSGLSVFIASLLLAII.

The protein belongs to the flocculin family. Post-translationally, extensively N- and O-glycosylated. In terms of processing, the GPI-anchor is attached to the protein in the endoplasmic reticulum and serves to target the protein to the cell surface. There, the glucosamine-inositol phospholipid moiety is cleaved off and the GPI-modified mannoprotein is covalently attached via its lipidless GPI glycan remnant to the 1,6-beta-glucan of the outer cell wall layer.

The protein localises to the cell membrane. The protein resides in the secreted. It localises to the cell wall. In terms of biological role, cell wall protein that participates directly in adhesive cell-cell interactions during yeast flocculation, a reversible, asexual and Ca(2+)-dependent process in which cells adhere to form aggregates (flocs) consisting of thousands of cells. The lectin-like protein sticks out of the cell wall of flocculent cells and selectively binds mannose residues in the cell walls of adjacent cells. Activity is inhibited by mannose, but not by glucose, maltose, sucrose or galactose. Also involved in cell-substrate adhesion. This chain is Flocculation protein FLO1 (FLO1), found in Saccharomyces cerevisiae (strain ATCC 204508 / S288c) (Baker's yeast).